The sequence spans 248 residues: 3-deoxy-manno-octulosonate cytidylyltransferase (248 aa).

Belongs to the KdsB family.

It localises to the cytoplasm. The catalysed reaction is 3-deoxy-alpha-D-manno-oct-2-ulosonate + CTP = CMP-3-deoxy-beta-D-manno-octulosonate + diphosphate. Its pathway is nucleotide-sugar biosynthesis; CMP-3-deoxy-D-manno-octulosonate biosynthesis; CMP-3-deoxy-D-manno-octulosonate from 3-deoxy-D-manno-octulosonate and CTP: step 1/1. The protein operates within bacterial outer membrane biogenesis; lipopolysaccharide biosynthesis. In terms of biological role, activates KDO (a required 8-carbon sugar) for incorporation into bacterial lipopolysaccharide in Gram-negative bacteria. In Shigella dysenteriae serotype 1 (strain Sd197), this protein is 3-deoxy-manno-octulosonate cytidylyltransferase.